The chain runs to 100 residues: MELTPREKDKLLLFTAALVAERRLARGLKLNYPESVALISAFIMEGARDGKSVASLMEEGRHVLTRKQVMEGVPEMIPDIQVEATFPDGSKLVTVHNPII.

This sequence belongs to the urease gamma subunit family. In terms of assembly, heterotrimer of UreA (gamma), UreB (beta) and UreC (alpha) subunits. Three heterotrimers associate to form the active enzyme.

It is found in the cytoplasm. The enzyme catalyses urea + 2 H2O + H(+) = hydrogencarbonate + 2 NH4(+). It functions in the pathway nitrogen metabolism; urea degradation; CO(2) and NH(3) from urea (urease route): step 1/1. The chain is Urease subunit gamma from Klebsiella pneumoniae.